We begin with the raw amino-acid sequence, 97 residues long: YcgL domain-containing protein PFLU_1517 (97 aa).

Residues 3-87 form the YcgL domain; that stretch reads RICSIYRSKK…AEDEYIEHLP (85 aa).

The polypeptide is YcgL domain-containing protein PFLU_1517 (Pseudomonas fluorescens (strain SBW25)).